Reading from the N-terminus, the 331-residue chain is Protein RecA (331 aa).

67–74 (GPESSGKT) serves as a coordination point for ATP.

The protein belongs to the RecA family.

The protein localises to the cytoplasm. Functionally, can catalyze the hydrolysis of ATP in the presence of single-stranded DNA, the ATP-dependent uptake of single-stranded DNA by duplex DNA, and the ATP-dependent hybridization of homologous single-stranded DNAs. It interacts with LexA causing its activation and leading to its autocatalytic cleavage. The polypeptide is Protein RecA (Wigglesworthia glossinidia brevipalpis).